Consider the following 445-residue polypeptide: Glutamate-1-semialdehyde 2,1-aminomutase (445 aa).

Lysine 281 carries the N6-(pyridoxal phosphate)lysine modification.

Belongs to the class-III pyridoxal-phosphate-dependent aminotransferase family. HemL subfamily. In terms of assembly, homodimer. Pyridoxal 5'-phosphate serves as cofactor.

It localises to the cytoplasm. It catalyses the reaction (S)-4-amino-5-oxopentanoate = 5-aminolevulinate. It participates in porphyrin-containing compound metabolism; protoporphyrin-IX biosynthesis; 5-aminolevulinate from L-glutamyl-tRNA(Glu): step 2/2. This chain is Glutamate-1-semialdehyde 2,1-aminomutase, found in Nocardioides sp. (strain ATCC BAA-499 / JS614).